We begin with the raw amino-acid sequence, 266 residues long: Protein crossbronx-like (266 aa).

In terms of domain architecture, UBC core spans 15–178 (KQGYHILAEY…VQEQAILSRN (164 aa)). The interval 234-266 (SSRQLDEEEANQVEKLHRGRIPEHQREESEVSL) is disordered. The segment covering 245 to 266 (QVEKLHRGRIPEHQREESEVSL) has biased composition (basic and acidic residues).

It belongs to the ubiquitin-conjugating enzyme family. FTS subfamily.

The polypeptide is Protein crossbronx-like (Drosophila melanogaster (Fruit fly)).